The primary structure comprises 95 residues: Aspartyl/glutamyl-tRNA(Asn/Gln) amidotransferase subunit C (95 aa).

This sequence belongs to the GatC family. In terms of assembly, heterotrimer of A, B and C subunits.

The catalysed reaction is L-glutamyl-tRNA(Gln) + L-glutamine + ATP + H2O = L-glutaminyl-tRNA(Gln) + L-glutamate + ADP + phosphate + H(+). It carries out the reaction L-aspartyl-tRNA(Asn) + L-glutamine + ATP + H2O = L-asparaginyl-tRNA(Asn) + L-glutamate + ADP + phosphate + 2 H(+). Its function is as follows. Allows the formation of correctly charged Asn-tRNA(Asn) or Gln-tRNA(Gln) through the transamidation of misacylated Asp-tRNA(Asn) or Glu-tRNA(Gln) in organisms which lack either or both of asparaginyl-tRNA or glutaminyl-tRNA synthetases. The reaction takes place in the presence of glutamine and ATP through an activated phospho-Asp-tRNA(Asn) or phospho-Glu-tRNA(Gln). This Chlorobium limicola (strain DSM 245 / NBRC 103803 / 6330) protein is Aspartyl/glutamyl-tRNA(Asn/Gln) amidotransferase subunit C.